The chain runs to 472 residues: FAD-dependent monooxygenase ltmM (472 aa).

A helical membrane pass occupies residues 7–27 (VIIVGGSVAGLSLAHCLEKIG). The FAD site is built by glutamate 34, glycine 48, and arginine 107. Residue asparagine 186 is glycosylated (N-linked (GlcNAc...) asparagine). Positions 306 and 319 each coordinate FAD. The helical transmembrane segment at 450–470 (IVYALYLVAAAAFILYCLSSL) threads the bilayer.

Belongs to the paxM FAD-dependent monooxygenase family. FAD serves as cofactor.

It localises to the membrane. It functions in the pathway secondary metabolite biosynthesis. FAD-dependent monooxygenase; part of the gene cluster that mediates the biosynthesis of lolitrems, indole-diterpene mycotoxins that are potent tremorgens in mammals, and are synthesized by clavicipitaceous fungal endophytes in association with their grass hosts. The geranylgeranyl diphosphate (GGPP) synthase ltmG is proposed to catalyze the first step in lolitrem biosynthesis. LtmG catalyzes a series of iterative condensations of isopentenyl diphosphate (IPP) with dimethylallyl diphosphate (DMAPP), geranyl diphosphate (GPP), and farnesyl diphosphate (FPP), to form GGPP. GGPP then condenses with indole-3-glycerol phosphate to form 3-geranylgeranylindole, an acyclic intermediate, to be incorporated into paxilline. Either ltmG or ltmC could be responsible for this step, as both are putative prenyl transferases. The FAD-dependent monooxygenase ltmM then catalyzes the epoxidation of the two terminal alkenes of the geranylgeranyl moiety, which is subsequently cyclized by ltmC, to paspaline. The cytochrome P450 monooxygenases ltmQ and ltmP can sequentially oxidize paspaline to terpendole E and terpendole F. Alternatively, ltmP converts paspaline to an intermediate which is oxidized by ltmQ to terpendole F. LtmF, ltmK, ltmE and ltmJ appear to be unique to the epichloe endophytes. The prenyltransferase ltmF is involved in the 27-hydroxyl-O-prenylation. The cytochrome P450 monooxygenase ltmK is required for the oxidative acetal ring formation. The multi-functional prenyltransferase ltmE is required for C20- and C21-prenylations of the indole ring of paspalanes and acts together with the cytochrome P450 monooxygenase ltmJ to yield lolitremanes by multiple oxidations and ring closures. The stereoisomer pairs of lolitriol and lolitrem N or lolitrem B and lolitrem F may be attributed to variations in the way in which ring closure can occur under the action of ltmJ. While the major product of this pathway is lolitrem B, the prenyl transferases and cytochrome P450 monooxygenases identified in this pathway have a remarkable versatility in their regio- and stereo-specificities to generate a diverse range of metabolites that are products of a metabolic grid rather than a linear pathway. The sequence is that of FAD-dependent monooxygenase ltmM (ltmM) from Epichloe festucae (strain Fl1).